The following is a 140-amino-acid chain: Transcription antitermination protein NusB (140 aa).

Belongs to the NusB family.

In terms of biological role, involved in transcription antitermination. Required for transcription of ribosomal RNA (rRNA) genes. Binds specifically to the boxA antiterminator sequence of the ribosomal RNA (rrn) operons. The sequence is that of Transcription antitermination protein NusB from Streptococcus pneumoniae serotype 2 (strain D39 / NCTC 7466).